The following is a 261-amino-acid chain: Putative [LysW]-aminoadipate/[LysW]-glutamate kinase (261 aa).

Substrate is bound by residues G35–G36, R62, and N162.

Belongs to the acetylglutamate kinase family. LysZ subfamily.

It localises to the cytoplasm. The enzyme catalyses [amino-group carrier protein]-C-terminal-N-(1,4-dicarboxybutan-1-yl)-L-glutamine + ATP = [amino-group carrier protein]-C-terminal-N-(1-carboxy-5-phosphooxy-5-oxopentan-1-yl)-L-glutamine + ADP. The catalysed reaction is [amino-group carrier protein]-C-terminal-gamma-(L-glutamyl)-L-glutamate + ATP = [amino-group carrier protein]-C-terminal-gamma-(5-phospho-L-glutamyl)-L-glutamate + ADP. It functions in the pathway amino-acid biosynthesis; L-lysine biosynthesis via AAA pathway; L-lysine from L-alpha-aminoadipate (Thermus route): step 2/5. Its pathway is amino-acid biosynthesis; L-arginine biosynthesis. Its function is as follows. Involved in both the arginine and lysine biosynthetic pathways. Phosphorylates the LysW-bound precursors glutamate (for arginine biosynthesis), respectively alpha-aminoadipate (for lysine biosynthesis). This is Putative [LysW]-aminoadipate/[LysW]-glutamate kinase from Pyrobaculum aerophilum (strain ATCC 51768 / DSM 7523 / JCM 9630 / CIP 104966 / NBRC 100827 / IM2).